We begin with the raw amino-acid sequence, 579 residues long: Moesin a (579 aa).

An FERM domain is found at 5-295 (ISVRVTTMDA…GNHELYMRRR (291 aa)). The stretch at 306-448 (KAQAKEEKNH…EDEALEWQTK (143 aa)) forms a coiled coil. Disordered stretches follow at residues 308–341 (QAKE…EKIE), 376–418 (EQER…EHLA), and 464–519 (KNKV…KNER). Basic and acidic residues predominate over residues 376-400 (EQERKRAQEEAERLERERRLAEEAK). The span at 490–501 (AEASAELTSAAA) shows a compositional bias: low complexity. Over residues 502-519 (YKDRSEEERMTEAEKNER) the composition is skewed to basic and acidic residues. A coiled-coil region spans residues 517–551 (NERVQKHLLALTSELANARDETKKTQNDIIHAENV).

It localises to the cell membrane. It is found in the cell junction. Its function is as follows. Positively regulates endothelial adherens junction formation and stabilization. Is thereby required for intersegmental vessel luminal membrane formation and stabilization during tubulogenesis in the early stages of development, independent of blood flow dynamics. The chain is Moesin a from Danio rerio (Zebrafish).